The primary structure comprises 324 residues: Beta-ketoacyl-[acyl-carrier-protein] synthase III (324 aa).

Catalysis depends on residues C111 and H251. Positions Q252–R256 are ACP-binding. Residue N281 is part of the active site.

The protein belongs to the thiolase-like superfamily. FabH family. Homodimer.

The protein localises to the plastid. It is found in the chloroplast. The enzyme catalyses malonyl-[ACP] + acetyl-CoA + H(+) = 3-oxobutanoyl-[ACP] + CO2 + CoA. It participates in lipid metabolism; fatty acid biosynthesis. Functionally, catalyzes the condensation reaction of fatty acid synthesis by the addition to an acyl acceptor of two carbons from malonyl-ACP. Catalyzes the first condensation reaction which initiates fatty acid synthesis and may therefore play a role in governing the total rate of fatty acid production. Possesses both acetoacetyl-ACP synthase and acetyl transacylase activities. Its substrate specificity determines the biosynthesis of branched-chain and/or straight-chain of fatty acids. The polypeptide is Beta-ketoacyl-[acyl-carrier-protein] synthase III (Pyropia yezoensis (Susabi-nori)).